We begin with the raw amino-acid sequence, 345 residues long: Uroporphyrinogen decarboxylase (345 aa).

Substrate-binding positions include 27–31, phenylalanine 46, aspartate 76, tyrosine 152, serine 207, and histidine 320; that span reads RQAGR.

Belongs to the uroporphyrinogen decarboxylase family. Homodimer.

The protein localises to the cytoplasm. The enzyme catalyses uroporphyrinogen III + 4 H(+) = coproporphyrinogen III + 4 CO2. It functions in the pathway porphyrin-containing compound metabolism; protoporphyrin-IX biosynthesis; coproporphyrinogen-III from 5-aminolevulinate: step 4/4. Its function is as follows. Catalyzes the decarboxylation of four acetate groups of uroporphyrinogen-III to yield coproporphyrinogen-III. This Geobacillus kaustophilus (strain HTA426) protein is Uroporphyrinogen decarboxylase.